The primary structure comprises 323 residues: tRNA(Ile)-lysidine synthase (323 aa).

Residue 33 to 38 (SGGPDS) coordinates ATP.

Belongs to the tRNA(Ile)-lysidine synthase family.

It is found in the cytoplasm. The catalysed reaction is cytidine(34) in tRNA(Ile2) + L-lysine + ATP = lysidine(34) in tRNA(Ile2) + AMP + diphosphate + H(+). Ligates lysine onto the cytidine present at position 34 of the AUA codon-specific tRNA(Ile) that contains the anticodon CAU, in an ATP-dependent manner. Cytidine is converted to lysidine, thus changing the amino acid specificity of the tRNA from methionine to isoleucine. In Mycobacterium bovis (strain ATCC BAA-935 / AF2122/97), this protein is tRNA(Ile)-lysidine synthase.